Here is a 1239-residue protein sequence, read N- to C-terminus: Erythroid differentiation-related factor 1 (1239 aa).

4 disordered regions span residues 1 to 39 (MGDP…QGSA), 219 to 269 (AQPV…REPL), 517 to 559 (PKKE…DPAD), and 620 to 646 (KKES…TRGG). Low complexity-rich tracts occupy residues 9-28 (AEAS…LSQA) and 253-263 (SSVSEDPSASS). Over residues 530–547 (NSDESYSEEEEEMADSDE) the composition is skewed to acidic residues. 2 TPR repeats span residues 693–726 (SKAY…HDTY) and 914–953 (AQAH…LGTR).

It localises to the nucleus. Transcription factor involved in erythroid differentiation. Involved in transcriptional activation of the globin gene. The sequence is that of Erythroid differentiation-related factor 1 (Edrf1) from Mus musculus (Mouse).